The following is a 123-amino-acid chain: Ribonuclease P protein component (123 aa).

This sequence belongs to the RnpA family. In terms of assembly, consists of a catalytic RNA component (M1 or rnpB) and a protein subunit.

It catalyses the reaction Endonucleolytic cleavage of RNA, removing 5'-extranucleotides from tRNA precursor.. Its function is as follows. RNaseP catalyzes the removal of the 5'-leader sequence from pre-tRNA to produce the mature 5'-terminus. It can also cleave other RNA substrates such as 4.5S RNA. The protein component plays an auxiliary but essential role in vivo by binding to the 5'-leader sequence and broadening the substrate specificity of the ribozyme. This chain is Ribonuclease P protein component, found in Bordetella petrii (strain ATCC BAA-461 / DSM 12804 / CCUG 43448).